Consider the following 372-residue polypeptide: UDP-N-acetylglucosamine--N-acetylmuramyl-(pentapeptide) pyrophosphoryl-undecaprenol N-acetylglucosamine transferase (372 aa).

UDP-N-acetyl-alpha-D-glucosamine is bound by residues 10–12, N124, R166, S196, I256, and Q301; that span reads TGG.

This sequence belongs to the glycosyltransferase 28 family. MurG subfamily.

It is found in the cell membrane. It carries out the reaction di-trans,octa-cis-undecaprenyl diphospho-N-acetyl-alpha-D-muramoyl-L-alanyl-D-glutamyl-meso-2,6-diaminopimeloyl-D-alanyl-D-alanine + UDP-N-acetyl-alpha-D-glucosamine = di-trans,octa-cis-undecaprenyl diphospho-[N-acetyl-alpha-D-glucosaminyl-(1-&gt;4)]-N-acetyl-alpha-D-muramoyl-L-alanyl-D-glutamyl-meso-2,6-diaminopimeloyl-D-alanyl-D-alanine + UDP + H(+). It participates in cell wall biogenesis; peptidoglycan biosynthesis. Its function is as follows. Cell wall formation. Catalyzes the transfer of a GlcNAc subunit on undecaprenyl-pyrophosphoryl-MurNAc-pentapeptide (lipid intermediate I) to form undecaprenyl-pyrophosphoryl-MurNAc-(pentapeptide)GlcNAc (lipid intermediate II). In Desulforamulus reducens (strain ATCC BAA-1160 / DSM 100696 / MI-1) (Desulfotomaculum reducens), this protein is UDP-N-acetylglucosamine--N-acetylmuramyl-(pentapeptide) pyrophosphoryl-undecaprenol N-acetylglucosamine transferase.